Reading from the N-terminus, the 516-residue chain is Putative GTP-binding protein 6 (516 aa).

Low complexity predominate over residues 18–39; it reads GRGRSAPRAAAPSCPARALAAV. Residues 18–82 are disordered; it reads GRGRSAPRAA…PEDADENAEE (65 aa). Positions 57-67 are enriched in basic and acidic residues; that stretch reads LRADGGRSRTG. Over residues 68-82 the composition is skewed to acidic residues; the sequence is DDEEEPEDADENAEE. One can recognise a Hflx-type G domain in the interval 295-459; the sequence is PVISVVGYTN…ELDAAVLKAT (165 aa). GTP contacts are provided by residues 301 to 308, 327 to 331, 349 to 352, 418 to 421, and 437 to 439; these read GYTNCGKT, FATLD, DTIG, NKVD, and SAL. Residues Thr308 and Thr329 each contribute to the Mg(2+) site.

This sequence belongs to the TRAFAC class OBG-HflX-like GTPase superfamily. HflX GTPase family. It depends on Mg(2+) as a cofactor. Ubiquitously expressed.

In Homo sapiens (Human), this protein is Putative GTP-binding protein 6 (GTPBP6).